The chain runs to 357 residues: uncharacterized protein (357 aa).

The 170-residue stretch at 27 to 196 folds into the PNPLA domain; sequence LVCEGGGQRG…SDAIPVKEAA (170 aa). The GXGXXG signature appears at 31-36; that stretch reads GGGQRG. Positions 59-63 match the GXSXG motif; sequence GTSAG. Catalysis depends on Ser61, which acts as the Nucleophile. Asp183 serves as the catalytic Proton acceptor. A DGA/G motif is present at residues 183–185; that stretch reads DGG.

Functionally, probable lipid hydrolase. This is an uncharacterized protein from Escherichia coli (strain K12).